The sequence spans 484 residues: BAHD acyltransferase DCR (484 aa).

The Proton acceptor role is filled by H168. The disordered stretch occupies residues 211 to 233 (LDLTAPKDPNETSNGEDAANPTV). D394 serves as the catalytic Proton acceptor. A disordered region spans residues 452–484 (EEEEDDGKKLTNGNGHVNGNGNGYVNGNGNGFV). The segment covering 467–484 (HVNGNGNGYVNGNGNGFV) has biased composition (gly residues).

It belongs to the plant acyltransferase family. Expressed in root caps and lateral root emerging sites, in trichomes, in epidermis in stems, sepals and anther filaments, and in pollen grains and torpedo stage seeds.

It is found in the cytoplasm. The protein resides in the cytosol. Its function is as follows. Required for incorporation of 9(10),16-dihydroxy-hexadecanoic acid into cutin. This chain is BAHD acyltransferase DCR (DCR), found in Arabidopsis thaliana (Mouse-ear cress).